The primary structure comprises 229 residues: ATP synthase subunit a (229 aa).

6 helical membrane passes run 25–45 (ADAV…SIAA), 82–102 (FFPL…IGLI), 104–124 (GFFP…VVFV), 142–162 (FLGP…IGHL), 181–201 (LVLI…MMLM), and 202–222 (GVLV…IYIQ).

It belongs to the ATPase A chain family. F-type ATPases have 2 components, CF(1) - the catalytic core - and CF(0) - the membrane proton channel. CF(1) has five subunits: alpha(3), beta(3), gamma(1), delta(1), epsilon(1). CF(0) has three main subunits: a(1), b(2) and c(9-12). The alpha and beta chains form an alternating ring which encloses part of the gamma chain. CF(1) is attached to CF(0) by a central stalk formed by the gamma and epsilon chains, while a peripheral stalk is formed by the delta and b chains.

It is found in the cell inner membrane. Key component of the proton channel; it plays a direct role in the translocation of protons across the membrane. The protein is ATP synthase subunit a of Geobacter sp. (strain M21).